The chain runs to 205 residues: Imidazole glycerol phosphate synthase subunit HisH (205 aa).

Residues 3–205 form the Glutamine amidotransferase type-1 domain; sequence KIGLIDYGMG…LLRRWLSNIQ (203 aa). The active-site Nucleophile is C81. Residues H185 and E187 contribute to the active site.

Heterodimer of HisH and HisF.

The protein localises to the cytoplasm. It catalyses the reaction 5-[(5-phospho-1-deoxy-D-ribulos-1-ylimino)methylamino]-1-(5-phospho-beta-D-ribosyl)imidazole-4-carboxamide + L-glutamine = D-erythro-1-(imidazol-4-yl)glycerol 3-phosphate + 5-amino-1-(5-phospho-beta-D-ribosyl)imidazole-4-carboxamide + L-glutamate + H(+). It carries out the reaction L-glutamine + H2O = L-glutamate + NH4(+). It functions in the pathway amino-acid biosynthesis; L-histidine biosynthesis; L-histidine from 5-phospho-alpha-D-ribose 1-diphosphate: step 5/9. In terms of biological role, IGPS catalyzes the conversion of PRFAR and glutamine to IGP, AICAR and glutamate. The HisH subunit catalyzes the hydrolysis of glutamine to glutamate and ammonia as part of the synthesis of IGP and AICAR. The resulting ammonia molecule is channeled to the active site of HisF. The protein is Imidazole glycerol phosphate synthase subunit HisH of Prochlorococcus marinus (strain MIT 9312).